Here is a 1406-residue protein sequence, read N- to C-terminus: Inactive tyrosine-protein kinase PRAG1 (1406 aa).

S148 carries the post-translational modification Phosphoserine. Over residues 184-193 (EEKAVHKEKP) the composition is skewed to basic and acidic residues. Disordered stretches follow at residues 184–205 (EEKAVHKEKPSFPYQDRPSTQE) and 217–248 (TTSGCHQGPGPLRESLPSEDDSDQRCSPSGDS). A phosphotyrosine mark is found at Y253, Y365, and Y413. Disordered stretches follow at residues 372-470 (PAPE…TPQV) and 484-854 (DHRT…HSET). The segment covering 526 to 542 (RESHAHSASESKPKERP) has biased composition (basic and acidic residues). Residues 546 to 576 (PKLSKSSPVGSPVSPSAGGPPVSPLADLSDG) show a composition bias toward low complexity. Composition is skewed to polar residues over residues 660 to 671 (NGPTDHSNSTTW) and 678 to 695 (DGSSGQNSKVGTGMSKSA). A phosphoserine mark is found at S696 and S745. Polar residues-rich tracts occupy residues 737–746 (SQGSAESLSP) and 754–770 (SFTTGSTDSLASDSRTC). At S782 the chain carries Phosphoserine. Over residues 798 to 808 (SGSTEDVSPSG) the composition is skewed to polar residues. The residue at position 826 (S826) is a Phosphoserine. Positions 933–976 (STQLQLHGLLSNISSKEGTYAKLGGLYTQSLARLVAKCEDLFMG) are required for homodimerization. Residues 978-1329 (QKKELHFNEN…EAKRVLQCLL (352 aa)) form the Protein kinase domain. Pro residues predominate over residues 1163 to 1173 (GPAPAPAPAPA). The tract at residues 1163-1206 (GPAPAPAPAPAPAAAAPPCSSAAPPAGGTLSPAAGPASPEGPRE) is disordered. The span at 1174 to 1202 (PAAAAPPCSSAAPPAGGTLSPAAGPASPE) shows a compositional bias: low complexity. Residues 1331–1406 (GPRRELVQQP…LQSLKLLQLL (76 aa)) form a required for homodimerization region.

The protein belongs to the protein kinase superfamily. Homodimer. Dimerization leads to the catalytic activation of CSK. Interacts (via C-terminus) with RND2. Interacts with CSK (via SH2 domain) in a Tyr-413 phosphorylation-dependent manner; this interaction potentiates kinase activity of CSK. Interacts with PEAK1. Interacts with NOTCH1 intracellular domain (N1ICD). Forms a complex with N1ICD and MAML1, in a MAML1-dependent manner. Phosphorylated by CSK on Tyr-253, Tyr-365, and Tyr-413; Tyr-413 is a primary site of phosphorylation.

Its subcellular location is the cytoplasm. The protein localises to the cell junction. It localises to the focal adhesion. The protein resides in the nucleus. In terms of biological role, catalytically inactive protein kinase that acts as a scaffold protein. Functions as an effector of the small GTPase RND2, which stimulates RhoA activity and inhibits NGF-induced neurite outgrowth. Promotes Src family kinase (SFK) signaling by regulating the subcellular localization of CSK, a negative regulator of these kinases, leading to the regulation of cell morphology and motility by a CSK-dependent mechanism. Acts as a critical coactivator of Notch signaling. This is Inactive tyrosine-protein kinase PRAG1 from Homo sapiens (Human).